The following is a 423-amino-acid chain: Gamma-glutamyl phosphate reductase (423 aa).

This sequence belongs to the gamma-glutamyl phosphate reductase family.

It is found in the cytoplasm. The catalysed reaction is L-glutamate 5-semialdehyde + phosphate + NADP(+) = L-glutamyl 5-phosphate + NADPH + H(+). It participates in amino-acid biosynthesis; L-proline biosynthesis; L-glutamate 5-semialdehyde from L-glutamate: step 2/2. In terms of biological role, catalyzes the NADPH-dependent reduction of L-glutamate 5-phosphate into L-glutamate 5-semialdehyde and phosphate. The product spontaneously undergoes cyclization to form 1-pyrroline-5-carboxylate. The sequence is that of Gamma-glutamyl phosphate reductase from Burkholderia vietnamiensis (strain G4 / LMG 22486) (Burkholderia cepacia (strain R1808)).